We begin with the raw amino-acid sequence, 507 residues long: ATP synthase subunit alpha, chloroplastic (507 aa).

Residue 170–177 participates in ATP binding; sequence GDRQTGKT.

Belongs to the ATPase alpha/beta chains family. In terms of assembly, F-type ATPases have 2 components, CF(1) - the catalytic core - and CF(0) - the membrane proton channel. CF(1) has five subunits: alpha(3), beta(3), gamma(1), delta(1), epsilon(1). CF(0) has four main subunits: a, b, b' and c.

The protein localises to the plastid. It localises to the chloroplast thylakoid membrane. The enzyme catalyses ATP + H2O + 4 H(+)(in) = ADP + phosphate + 5 H(+)(out). In terms of biological role, produces ATP from ADP in the presence of a proton gradient across the membrane. The alpha chain is a regulatory subunit. The polypeptide is ATP synthase subunit alpha, chloroplastic (Citrus sinensis (Sweet orange)).